The sequence spans 362 residues: Epoxide hydrolase 4 (362 aa).

Residues 17–37 (SLLFWSLVYCYCGLCASIHLL) traverse the membrane as a helical; Signal-anchor for type II membrane protein segment. The AB hydrolase-1 domain occupies 94–211 (PLMLLLHGFP…EYILRHPAQL (118 aa)). Aspartate 169 serves as the catalytic Nucleophile. The active-site Proton donor is the tyrosine 281. Histidine 336 functions as the Proton acceptor in the catalytic mechanism.

The protein belongs to the AB hydrolase superfamily. Epoxide hydrolase family.

It localises to the membrane. The chain is Epoxide hydrolase 4 (EPHX4) from Homo sapiens (Human).